A 314-amino-acid polypeptide reads, in one-letter code: Serine/threonine-protein phosphatase PP2A-5 catalytic subunit (314 aa).

Mn(2+) is bound by residues Asp62, His64, Asp90, and Asn122. The active-site Proton donor is the His123. Residues His172 and His246 each contribute to the Mn(2+) site.

Belongs to the PPP phosphatase family. PP-2A subfamily. Mn(2+) serves as cofactor.

It localises to the cytoplasm. It catalyses the reaction O-phospho-L-seryl-[protein] + H2O = L-seryl-[protein] + phosphate. It carries out the reaction O-phospho-L-threonyl-[protein] + H2O = L-threonyl-[protein] + phosphate. The protein is Serine/threonine-protein phosphatase PP2A-5 catalytic subunit (NPP5) of Nicotiana tabacum (Common tobacco).